The sequence spans 880 residues: uncharacterized protein (880 aa).

10 disordered regions span residues 101-149, 191-224, 240-273, 294-350, 425-446, 470-508, 536-561, 580-613, 682-713, and 844-880; these read KPIP…LRSE, PETSTPLISQSSQTSTITPSSSSTSTSTSSISTH, TTTTTTSSSSSSPPSSSIAGITNPTSRSSSPILK, NSNS…STTS, QPDSKDDESSVKSPPLPVESQP, STSTSPSSTTTTTSTTTSIIAEEPSSPILPTASPSSSSS, MESSTTTTLLSENNGGGGGSSCNDNS, APQSDSMIEQPEDDPFFDFEDLSDDDDSNDNDDE, NTNTNTNTNTNTNTNTNTNTNTNTNTNANINN, and NSSGSGNNSNDNSGSSSPSSSKTNTLNQQSICIKSEI. The stretch at 113-147 forms a coiled coil; it reads ISIKEKEKEKEKEKEKEKEKEKEKEKEMKSTINLR. Residues 115 to 149 show a composition bias toward basic and acidic residues; the sequence is IKEKEKEKEKEKEKEKEKEKEKEKEMKSTINLRSE. Low complexity-rich tracts occupy residues 193-223 and 240-256; these read TSTPLISQSSQTSTITPSSSSTSTSTSSIST and TTTTTTSSSSSSPPSSS. Residues 257–271 are compositionally biased toward polar residues; the sequence is IAGITNPTSRSSSPI. A compositionally biased stretch (low complexity) spans 294-332; it reads NSNSSSGGGNNNNKSISTPSSPIISRPITNKINNNNNNN. Residues 333 to 342 are compositionally biased toward polar residues; it reads QPQLHYNQPQ. Positions 536-548 are enriched in low complexity; sequence MESSTTTTLLSEN. Positions 589–613 are enriched in acidic residues; it reads QPEDDPFFDFEDLSDDDDSNDNDDE. Residues 844-864 are compositionally biased toward low complexity; sequence NSSGSGNNSNDNSGSSSPSSS. The segment covering 865-880 has biased composition (polar residues); sequence KTNTLNQQSICIKSEI.

This is an uncharacterized protein from Dictyostelium discoideum (Social amoeba).